Reading from the N-terminus, the 234-residue chain is Cyclin-J18 (234 aa).

It belongs to the cyclin family.

In Arabidopsis thaliana (Mouse-ear cress), this protein is Cyclin-J18 (CYCJ18).